The sequence spans 263 residues: Putative TATA-binding protein pB263R (263 aa).

Belongs to the asfivirus B263R family.

Functionally, putative TATA-binding protein. The sequence is that of Putative TATA-binding protein pB263R from Ornithodoros (relapsing fever ticks).